The following is a 103-amino-acid chain: Small ribosomal subunit protein uS10 (103 aa).

This sequence belongs to the universal ribosomal protein uS10 family. In terms of assembly, part of the 30S ribosomal subunit.

Its function is as follows. Involved in the binding of tRNA to the ribosomes. This is Small ribosomal subunit protein uS10 from Laribacter hongkongensis (strain HLHK9).